The chain runs to 293 residues: Protease HtpX homolog (293 aa).

2 helical membrane-spanning segments follow: residues 4-24 (VILF…TLRI) and 40-60 (ALLM…LLIS). Residue H146 participates in Zn(2+) binding. E147 is an active-site residue. H150 serves as a coordination point for Zn(2+). The next 2 membrane-spanning stretches (helical) occupy residues 161-181 (LIQG…GYFV) and 198-218 (VTVI…VAWF). E223 is a binding site for Zn(2+).

This sequence belongs to the peptidase M48B family. Requires Zn(2+) as cofactor.

It localises to the cell inner membrane. The sequence is that of Protease HtpX homolog from Bordetella avium (strain 197N).